Consider the following 156-residue polypeptide: SsrA-binding protein (156 aa).

The segment at 127–156 (GKKKYDKREDLKKKDAKRDVDRAMRDRQKY) is disordered. The segment covering 132 to 156 (DKREDLKKKDAKRDVDRAMRDRQKY) has biased composition (basic and acidic residues).

It belongs to the SmpB family.

It localises to the cytoplasm. Functionally, required for rescue of stalled ribosomes mediated by trans-translation. Binds to transfer-messenger RNA (tmRNA), required for stable association of tmRNA with ribosomes. tmRNA and SmpB together mimic tRNA shape, replacing the anticodon stem-loop with SmpB. tmRNA is encoded by the ssrA gene; the 2 termini fold to resemble tRNA(Ala) and it encodes a 'tag peptide', a short internal open reading frame. During trans-translation Ala-aminoacylated tmRNA acts like a tRNA, entering the A-site of stalled ribosomes, displacing the stalled mRNA. The ribosome then switches to translate the ORF on the tmRNA; the nascent peptide is terminated with the 'tag peptide' encoded by the tmRNA and targeted for degradation. The ribosome is freed to recommence translation, which seems to be the essential function of trans-translation. The chain is SsrA-binding protein from Exiguobacterium sp. (strain ATCC BAA-1283 / AT1b).